The primary structure comprises 656 residues: uncharacterized protein (656 aa).

Residues Glu623–Arg656 form a disordered region. Over residues Thr645–Arg656 the composition is skewed to basic and acidic residues.

This is an uncharacterized protein from Mycobacterium tuberculosis (strain ATCC 25618 / H37Rv).